We begin with the raw amino-acid sequence, 184 residues long: NADH-quinone oxidoreductase subunit B (184 aa).

Residues cysteine 37, cysteine 38, cysteine 103, and cysteine 132 each contribute to the [4Fe-4S] cluster site.

This sequence belongs to the complex I 20 kDa subunit family. As to quaternary structure, NDH-1 is composed of 14 different subunits. Subunits NuoB, C, D, E, F, and G constitute the peripheral sector of the complex. Requires [4Fe-4S] cluster as cofactor.

It localises to the cell membrane. The catalysed reaction is a quinone + NADH + 5 H(+)(in) = a quinol + NAD(+) + 4 H(+)(out). NDH-1 shuttles electrons from NADH, via FMN and iron-sulfur (Fe-S) centers, to quinones in the respiratory chain. The immediate electron acceptor for the enzyme in this species is believed to be a menaquinone. Couples the redox reaction to proton translocation (for every two electrons transferred, four hydrogen ions are translocated across the cytoplasmic membrane), and thus conserves the redox energy in a proton gradient. This chain is NADH-quinone oxidoreductase subunit B, found in Mycolicibacterium paratuberculosis (strain ATCC BAA-968 / K-10) (Mycobacterium paratuberculosis).